The following is a 302-amino-acid chain: Acidic endochitinase (302 aa).

The first 30 residues, 1 to 30 (MTNMTLRKHVIYFLFFISCSLSKPSDASRG), serve as a signal peptide directing secretion. The GH18 domain maps to 31–302 (GIAIYWGQNG…GYSSSILASV (272 aa)). 2 disulfide bridges follow: Cys49-Cys96 and Cys79-Cys86. Residue Glu156 is the Proton donor of the active site. Cys188 and Cys217 form a disulfide bridge.

The protein belongs to the glycosyl hydrolase 18 family. Chitinase class III subfamily.

It is found in the secreted. The protein localises to the extracellular space. It catalyses the reaction Random endo-hydrolysis of N-acetyl-beta-D-glucosaminide (1-&gt;4)-beta-linkages in chitin and chitodextrins.. Its function is as follows. This protein functions as a defense against chitin containing fungal pathogens. The chain is Acidic endochitinase (CHIB1) from Arabidopsis thaliana (Mouse-ear cress).